Reading from the N-terminus, the 316-residue chain is Aspartate carbamoyltransferase catalytic subunit (316 aa).

Carbamoyl phosphate contacts are provided by Arg-56 and Thr-57. L-aspartate is bound at residue Lys-84. Carbamoyl phosphate is bound by residues Arg-106, His-139, and Gln-142. L-aspartate contacts are provided by Arg-172 and Arg-224. Carbamoyl phosphate contacts are provided by Gly-268 and Pro-269.

The protein belongs to the aspartate/ornithine carbamoyltransferase superfamily. ATCase family. As to quaternary structure, heterododecamer (2C3:3R2) of six catalytic PyrB chains organized as two trimers (C3), and six regulatory PyrI chains organized as three dimers (R2).

The catalysed reaction is carbamoyl phosphate + L-aspartate = N-carbamoyl-L-aspartate + phosphate + H(+). It participates in pyrimidine metabolism; UMP biosynthesis via de novo pathway; (S)-dihydroorotate from bicarbonate: step 2/3. Its function is as follows. Catalyzes the condensation of carbamoyl phosphate and aspartate to form carbamoyl aspartate and inorganic phosphate, the committed step in the de novo pyrimidine nucleotide biosynthesis pathway. The chain is Aspartate carbamoyltransferase catalytic subunit from Ligilactobacillus salivarius (strain UCC118) (Lactobacillus salivarius).